A 199-amino-acid polypeptide reads, in one-letter code: Chorismate pyruvate-lyase (199 aa).

It belongs to the chorismate pyruvate-lyase type 2 family.

The catalysed reaction is chorismate = 4-hydroxybenzoate + pyruvate. Functionally, removes the pyruvyl group from chorismate to provide 4-hydroxybenzoate (4HB). Involved in the synthesis of glycosylated p-hydroxybenzoic acid methyl esters (p-HBADs) and phenolic glycolipids (PGL) that play important roles in the pathogenesis of mycobacterial infections. The polypeptide is Chorismate pyruvate-lyase (Mycobacterium bovis (strain ATCC BAA-935 / AF2122/97)).